The primary structure comprises 540 residues: MDHLNLCRYLTESILTDLELTLIDENENTLVINVHKLILSINCQYFETLFSGQFIDSQKNNLKLLVPDIHVVRDIIYGFYKNPIKYKNYPDWLYELKKIVCQNFLCLETNIEILHNIIVPTNGFDKLLDTIDLIGYDSDTISLLVGNMPDNYDLTKLPIELIRQMFDVPMFNMIYVSDKDGTFKIGNGNISFNITSNTLINNGHFEFSSIHNKIIYHHVCDIYVYDLLNYTTNKFTNPISHTIKSIVLTPDQEYIIYDSSPQIISKFDFISMEIIESRFAPTGAVVNDIFSSTELGHFGKIEELQCCNPNLLIIGSNVLSFYNVNDMLLMNIIENNIIPNDLYGRIYSSSIKKGRIFVSLLNDIIFVLSSINMYFIKPDTYEYIKKIHCNNFYNHDYCATNNDFWDICNINQDVIAILVGNLLTIYNWKLDKTIIQIDICHTECNGSYCKIDKIVYDSTTKLLFVDCSNSRSGKKIYSILMDNIDLNIPINNVDFSIFSKNKIMRYGNPKCISGIKKFKIIDNYKSKLYNNIEKYLKNNQ.

The 73-residue stretch at 16–88 (TDLELTLIDE…FYKNPIKYKN (73 aa)) folds into the BTB domain. A helical transmembrane segment spans residues 356 to 376 (IFVSLLNDIIFVLSSINMYFI).

It belongs to the mimivirus BTB/WD family.

Its subcellular location is the membrane. This chain is Putative BTB/POZ domain-containing protein R224, found in Acanthamoeba polyphaga (Amoeba).